A 379-amino-acid polypeptide reads, in one-letter code: UPF0754 membrane protein ABC1518 (379 aa).

The next 2 membrane-spanning stretches (helical) occupy residues 1-21 (MHWI…GAAT) and 358-378 (LLGG…VHFF).

Belongs to the UPF0754 family.

It is found in the cell membrane. The protein is UPF0754 membrane protein ABC1518 of Shouchella clausii (strain KSM-K16) (Alkalihalobacillus clausii).